The following is a 95-amino-acid chain: Aspartyl/glutamyl-tRNA(Asn/Gln) amidotransferase subunit C (95 aa).

The protein belongs to the GatC family. In terms of assembly, heterotrimer of A, B and C subunits.

It catalyses the reaction L-glutamyl-tRNA(Gln) + L-glutamine + ATP + H2O = L-glutaminyl-tRNA(Gln) + L-glutamate + ADP + phosphate + H(+). The catalysed reaction is L-aspartyl-tRNA(Asn) + L-glutamine + ATP + H2O = L-asparaginyl-tRNA(Asn) + L-glutamate + ADP + phosphate + 2 H(+). Functionally, allows the formation of correctly charged Asn-tRNA(Asn) or Gln-tRNA(Gln) through the transamidation of misacylated Asp-tRNA(Asn) or Glu-tRNA(Gln) in organisms which lack either or both of asparaginyl-tRNA or glutaminyl-tRNA synthetases. The reaction takes place in the presence of glutamine and ATP through an activated phospho-Asp-tRNA(Asn) or phospho-Glu-tRNA(Gln). The chain is Aspartyl/glutamyl-tRNA(Asn/Gln) amidotransferase subunit C from Acetivibrio thermocellus (strain ATCC 27405 / DSM 1237 / JCM 9322 / NBRC 103400 / NCIMB 10682 / NRRL B-4536 / VPI 7372) (Clostridium thermocellum).